A 142-amino-acid chain; its full sequence is Large ribosomal subunit protein uL13 (142 aa).

Belongs to the universal ribosomal protein uL13 family. As to quaternary structure, part of the 50S ribosomal subunit.

Functionally, this protein is one of the early assembly proteins of the 50S ribosomal subunit, although it is not seen to bind rRNA by itself. It is important during the early stages of 50S assembly. The polypeptide is Large ribosomal subunit protein uL13 (Pectobacterium atrosepticum (strain SCRI 1043 / ATCC BAA-672) (Erwinia carotovora subsp. atroseptica)).